Here is an 89-residue protein sequence, read N- to C-terminus: Putative regulatory protein Nther_1328 (89 aa).

This sequence belongs to the RemA family.

This is Putative regulatory protein Nther_1328 from Natranaerobius thermophilus (strain ATCC BAA-1301 / DSM 18059 / JW/NM-WN-LF).